Reading from the N-terminus, the 873-residue chain is Rho GTPase-activating protein gacJJ (873 aa).

The segment at aspartate 64–threonine 147 is disordered. The segment covering proline 66–serine 91 has biased composition (low complexity). Over residues isoleucine 103–asparagine 112 the composition is skewed to gly residues. Positions glycine 113–asparagine 144 are enriched in low complexity. Residues asparagine 301 to serine 402 enclose the PH domain. The Rho-GAP domain maps to valine 428 to phenylalanine 621. The SH3 domain maps to glutamate 628–histidine 694. Residues methionine 715–threonine 761 adopt a coiled-coil conformation.

Its subcellular location is the cytoplasm. Rho GTPase-activating protein involved in the signal transduction pathway. The polypeptide is Rho GTPase-activating protein gacJJ (gacJJ) (Dictyostelium discoideum (Social amoeba)).